The chain runs to 372 residues: Aminomethyltransferase (372 aa).

The protein belongs to the GcvT family. In terms of assembly, the glycine cleavage system is composed of four proteins: P, T, L and H.

The enzyme catalyses N(6)-[(R)-S(8)-aminomethyldihydrolipoyl]-L-lysyl-[protein] + (6S)-5,6,7,8-tetrahydrofolate = N(6)-[(R)-dihydrolipoyl]-L-lysyl-[protein] + (6R)-5,10-methylene-5,6,7,8-tetrahydrofolate + NH4(+). The glycine cleavage system catalyzes the degradation of glycine. This chain is Aminomethyltransferase, found in Prochlorococcus marinus (strain NATL2A).